We begin with the raw amino-acid sequence, 350 residues long: Quinolinate phosphoribosyltransferase [decarboxylating] 1 (350 aa).

Substrate is bound by residues arginine 141, 172-174 (TRK), arginine 196, lysine 206, glutamate 239, aspartate 266, 298-300 (SGN), and 319-321 (SGA).

This sequence belongs to the NadC/ModD family.

The catalysed reaction is nicotinate beta-D-ribonucleotide + CO2 + diphosphate = quinolinate + 5-phospho-alpha-D-ribose 1-diphosphate + 2 H(+). It participates in alkaloid biosynthesis; nicotine biosynthesis. Its pathway is cofactor biosynthesis; NAD(+) biosynthesis; nicotinate D-ribonucleotide from quinolinate: step 1/1. Functionally, involved in the biosynthesis of pyridine alkaloid natural products, leading mainly to the production of anabasine, anatabine, nicotine and nornicotine, effective deterrents against herbivores with antiparasitic and pesticide properties (neurotoxins); nornicotine serves as the precursor in the synthesis of the carcinogen compound N'-nitrosonornicotine (NNN). Involved in the catabolism of quinolinic acid (QA). The protein is Quinolinate phosphoribosyltransferase [decarboxylating] 1 of Nicotiana glauca (Glaucous tobacco).